The following is a 290-amino-acid chain: ATP synthase gamma chain (290 aa).

Belongs to the ATPase gamma chain family. In terms of assembly, F-type ATPases have 2 components, CF(1) - the catalytic core - and CF(0) - the membrane proton channel. CF(1) has five subunits: alpha(3), beta(3), gamma(1), delta(1), epsilon(1). CF(0) has three main subunits: a, b and c.

The protein localises to the cell inner membrane. Its function is as follows. Produces ATP from ADP in the presence of a proton gradient across the membrane. The gamma chain is believed to be important in regulating ATPase activity and the flow of protons through the CF(0) complex. This Erythrobacter litoralis (strain HTCC2594) protein is ATP synthase gamma chain.